Here is a 306-residue protein sequence, read N- to C-terminus: Ornithine carbamoyltransferase (306 aa).

Carbamoyl phosphate-binding positions include 46 to 49 (STRT), glutamine 73, arginine 97, and 124 to 127 (HPTQ). Residues asparagine 156, aspartate 220, and 224–225 (SM) each bind L-ornithine. Carbamoyl phosphate is bound by residues 260 to 261 (CL) and arginine 288.

This sequence belongs to the aspartate/ornithine carbamoyltransferase superfamily. OTCase family.

It localises to the cytoplasm. The enzyme catalyses carbamoyl phosphate + L-ornithine = L-citrulline + phosphate + H(+). The protein operates within amino-acid biosynthesis; L-arginine biosynthesis; L-arginine from L-ornithine and carbamoyl phosphate: step 1/3. Functionally, reversibly catalyzes the transfer of the carbamoyl group from carbamoyl phosphate (CP) to the N(epsilon) atom of ornithine (ORN) to produce L-citrulline. This is Ornithine carbamoyltransferase from Campylobacter jejuni (strain RM1221).